Consider the following 263-residue polypeptide: MAKKMTITSIKKSKGVHPLVMITAYDALFARLLEPSADMILVGDSLNMSFAGRDDTLSATLSQMIYHTNAVAKGAKNSFIICDMPFGTYTNRDDALKNSIKVFQESSADALKIEGGEDKAEIISHLCSNGIAVCGHIGLLPQAFRSEGGYKVKGKTDEERIQLIRDAKAIEKAGAFCMVIEGVKADVAAQVAASVKIPVIGIGAGRDVDGQVLVFSDMLGLFEEFTPKFVKKYLDGASLVKEALKSYADEVKTRAFPQDIHTY.

Positions 44 and 83 each coordinate Mg(2+). 3-methyl-2-oxobutanoate-binding positions include 44–45, aspartate 83, and lysine 112; that span reads DS. Residue glutamate 114 coordinates Mg(2+). The Proton acceptor role is filled by glutamate 181.

Belongs to the PanB family. Homodecamer; pentamer of dimers. Requires Mg(2+) as cofactor.

The protein localises to the cytoplasm. It carries out the reaction 3-methyl-2-oxobutanoate + (6R)-5,10-methylene-5,6,7,8-tetrahydrofolate + H2O = 2-dehydropantoate + (6S)-5,6,7,8-tetrahydrofolate. Its pathway is cofactor biosynthesis; (R)-pantothenate biosynthesis; (R)-pantoate from 3-methyl-2-oxobutanoate: step 1/2. Functionally, catalyzes the reversible reaction in which hydroxymethyl group from 5,10-methylenetetrahydrofolate is transferred onto alpha-ketoisovalerate to form ketopantoate. This chain is 3-methyl-2-oxobutanoate hydroxymethyltransferase, found in Sulfurimonas denitrificans (strain ATCC 33889 / DSM 1251) (Thiomicrospira denitrificans (strain ATCC 33889 / DSM 1251)).